We begin with the raw amino-acid sequence, 206 residues long: Large ribosomal subunit protein uL4 (206 aa).

A disordered region spans residues 42 to 93 (KKQQGTHKTKNRSEVSRTGAKMYKQKGTGRARHHSARAPQFRGGGKAHGPVV). Over residues 64 to 77 (YKQKGTGRARHHSA) the composition is skewed to basic residues.

The protein belongs to the universal ribosomal protein uL4 family. In terms of assembly, part of the 50S ribosomal subunit.

Its function is as follows. One of the primary rRNA binding proteins, this protein initially binds near the 5'-end of the 23S rRNA. It is important during the early stages of 50S assembly. It makes multiple contacts with different domains of the 23S rRNA in the assembled 50S subunit and ribosome. Functionally, forms part of the polypeptide exit tunnel. The sequence is that of Large ribosomal subunit protein uL4 from Agrobacterium fabrum (strain C58 / ATCC 33970) (Agrobacterium tumefaciens (strain C58)).